The sequence spans 60 residues: Large ribosomal subunit protein uL30 (60 aa).

This sequence belongs to the universal ribosomal protein uL30 family. In terms of assembly, part of the 50S ribosomal subunit.

In Alcanivorax borkumensis (strain ATCC 700651 / DSM 11573 / NCIMB 13689 / SK2), this protein is Large ribosomal subunit protein uL30.